The primary structure comprises 884 residues: E3 ubiquitin-protein ligase BRE1-like 1 (884 aa).

The interval 1–37 (MGSTGEPDRKRRLSSSVAPGGGAPVSPAKRLAVAPTS) is disordered. Residues 49–86 (YKNQKLSEQLEAHKFEYRALENKFAGLKEKQRTHNETL) adopt a coiled-coil conformation. The tract at residues 107 to 127 (KSGSPNSSPGSGHNNVQKDGT) is disordered. Over residues 108-121 (SGSPNSSPGSGHNN) the composition is skewed to low complexity. Coiled coils occupy residues 216–541 (LNNV…ELKL), 580–663 (SKLE…LQQI), 696–762 (RNLQ…QSLD), and 789–827 (KKRIEDDLEVMSRKASSLRAKARESAVLEKLRHEVKEYR). The RING-type zinc finger occupies 832–871 (CGICHDRQKEVVITKCYHLFCNQCIQKSLGNRQRRCPSCS).

It belongs to the BRE1 family. In terms of assembly, interacts with SKIPA. Interacts with HUB2.

It localises to the nucleus. The enzyme catalyses S-ubiquitinyl-[E2 ubiquitin-conjugating enzyme]-L-cysteine + [acceptor protein]-L-lysine = [E2 ubiquitin-conjugating enzyme]-L-cysteine + N(6)-ubiquitinyl-[acceptor protein]-L-lysine.. The protein operates within protein modification; protein ubiquitination. E3 ubiquitin-protein ligase that monoubiquitinates H2B to form H2BK143ub1. H2BK143ub1 gives a specific tag for epigenetic transcriptional activation and is a prerequisite for H3 Lys-4 methylation (H3K4me). It thereby plays a central role in histone code and gene regulation. H2B monoubiquitination (H2BK143ub1), mediated by HUB1, modulates transcriptional regulation of anther development, likely by promoting histone H3K4 dimethylation (H3K4me2) in the chromatin of the key tapetum degradation-related genes C4, CP1 and UDT1. This Oryza sativa subsp. japonica (Rice) protein is E3 ubiquitin-protein ligase BRE1-like 1.